The following is a 501-amino-acid chain: AKT kinase-transforming protein (501 aa).

A PH domain is found at alanine 26–aspartate 129. The segment at glutamate 135–serine 158 is disordered. In terms of domain architecture, Protein kinase spans phenylalanine 171–phenylalanine 429. ATP-binding positions include leucine 177–valine 185 and lysine 200. Aspartate 295 serves as the catalytic Proton acceptor. Tyrosine 347 is modified (phosphotyrosine). The AGC-kinase C-terminal domain maps to alanine 430 to alanine 501. The tract at residues threonine 471–alanine 501 is disordered.

It belongs to the protein kinase superfamily. AGC Ser/Thr protein kinase family. RAC subfamily. As to quaternary structure, interacts with mouse THEM4. Autophosphorylated on threonine and serine residues.

The enzyme catalyses L-seryl-[protein] + ATP = O-phospho-L-seryl-[protein] + ADP + H(+). The catalysed reaction is L-threonyl-[protein] + ATP = O-phospho-L-threonyl-[protein] + ADP + H(+). This chain is AKT kinase-transforming protein (V-AKT), found in Mus musculus (Mouse).